The sequence spans 128 residues: Large ribosomal subunit protein bL19 (128 aa).

The protein belongs to the bacterial ribosomal protein bL19 family.

This protein is located at the 30S-50S ribosomal subunit interface and may play a role in the structure and function of the aminoacyl-tRNA binding site. The sequence is that of Large ribosomal subunit protein bL19 from Herminiimonas arsenicoxydans.